The chain runs to 311 residues: Probable dihydroorotate dehydrogenase A (fumarate) (311 aa).

FMN contacts are provided by residues Ser20 and 44 to 45 (KT). Substrate is bound by residues Lys44, 68–72 (NSMGL), and Asn127. Asn127 is an FMN binding site. The active-site Nucleophile is the Cys130. FMN is bound by residues Lys164 and Ile192. Position 193-194 (193-194 (NS)) interacts with substrate. Residues Gly221, 249-250 (GG), and 271-272 (GT) each bind FMN.

Belongs to the dihydroorotate dehydrogenase family. Type 1 subfamily. As to quaternary structure, homodimer. FMN is required as a cofactor.

Its subcellular location is the cytoplasm. The catalysed reaction is (S)-dihydroorotate + fumarate = orotate + succinate. The protein operates within pyrimidine metabolism; UMP biosynthesis via de novo pathway. Its function is as follows. Catalyzes the conversion of dihydroorotate to orotate with fumarate as the electron acceptor. The sequence is that of Probable dihydroorotate dehydrogenase A (fumarate) (pyrDA) from Enterococcus faecalis (strain ATCC 700802 / V583).